Here is a 298-residue protein sequence, read N- to C-terminus: Protoheme IX farnesyltransferase (298 aa).

9 consecutive transmembrane segments (helical) span residues 26 to 46, 52 to 72, 93 to 113, 120 to 140, 148 to 168, 174 to 194, 219 to 239, 241 to 261, and 278 to 298; these read VVSL…PGAV, LLGT…NCLV, VSVP…LFIL, LTMW…TVIL, IVIG…AITG, ALLL…ALAL, LHVL…YLTQ, SGLI…YYAI, and YSII…YFYF.

The protein belongs to the UbiA prenyltransferase family. Protoheme IX farnesyltransferase subfamily.

The protein localises to the cell inner membrane. It carries out the reaction heme b + (2E,6E)-farnesyl diphosphate + H2O = Fe(II)-heme o + diphosphate. It functions in the pathway porphyrin-containing compound metabolism; heme O biosynthesis; heme O from protoheme: step 1/1. Its function is as follows. Converts heme B (protoheme IX) to heme O by substitution of the vinyl group on carbon 2 of heme B porphyrin ring with a hydroxyethyl farnesyl side group. This is Protoheme IX farnesyltransferase from Nitrosomonas eutropha (strain DSM 101675 / C91 / Nm57).